We begin with the raw amino-acid sequence, 539 residues long: Gamma-2-syntrophin (539 aa).

The region spanning 73 to 156 is the PDZ domain; that stretch reads TVTLRRQPVG…EVTITVEYLR (84 aa). 2 stretches are compositionally biased toward low complexity: residues 168-183 and 194-205; these read SPGP…SSPL and SSTTAPSSPSSP. Residues 168-209 are disordered; it reads SPGPSSDHSSGASSPLFDSGLHLNGNSSTTAPSSPSSPIAKD. Residues 296-421 enclose the PH domain; sequence QVVHMGWVNE…WEKSFQRATF (126 aa).

Belongs to the syntrophin family. Interacts with the dystrophin protein DMD and related proteins DTNA and DTNB. As to expression, widely expressed. Strong expression in brain and testis. In CNS, it is expressed in the perikaryon and proximal portion of the neuronal processes. Strong expression in the hippocampus, neuron-rich dendate granule cells, and pyramidal cell layers. Highly expressed in neurons of the cerebral cortex. Also expressed in the cerebellar cortex, deep cerebellar nuclei, thalamus, and basal ganglia.

The protein resides in the cell membrane. It is found in the sarcolemma. It localises to the cytoplasm. Its subcellular location is the cytoskeleton. Its function is as follows. Adapter protein that binds to and probably organizes the subcellular localization of a variety of proteins. May link various receptors to the actin cytoskeleton and the dystrophin glycoprotein complex. The polypeptide is Gamma-2-syntrophin (SNTG2) (Homo sapiens (Human)).